A 333-amino-acid chain; its full sequence is Starch-binding domain-containing protein 1 (333 aa).

The Extracellular portion of the chain corresponds to 1–6 (MGAVWS). Residues 7–23 (ALLVGGGLAGALILWLL) form a helical membrane-spanning segment. Topologically, residues 24–333 (RGDSGAPGKD…KVVHGWWGIH (310 aa)) are cytoplasmic. Disordered stretches follow at residues 31–73 (GKDG…ELVS) and 106–139 (NAREYVPVGKVPDTHSRANSETSRNQSPESRVGE). Residues 50–61 (PGGGPGGGGSGG) show a composition bias toward gly residues. The residue at position 67 (Ser67) is a Phosphoserine. Residues 124-134 (NSETSRNQSPE) show a composition bias toward polar residues. 2 positions are modified to phosphoserine: Ser135 and Ser162. Residues 181–187 (HEDWEVV) carry the LIR motif. A phosphoserine mark is found at Ser191, Ser192, Ser201, Ser205, Ser208, Ser216, and Ser219. The region spanning 233–332 (SVKPRQVSIQ…DKVVHGWWGI (100 aa)) is the CBM20 domain.

In terms of assembly, interacts with the ATG8 family proteins GABARAP and GABARAPL1. Interacts with several glycogen-associated proteins, such as GYS2 (liver glycogen synthase), GDE (glycogen debranching enzyme), GBE1 (glycogen branching enzyme 1) and EPM2A (Laforin). Ubiquitinated, which leads to proteasomal degradation.

The protein localises to the preautophagosomal structure membrane. It is found in the endoplasmic reticulum membrane. It localises to the cell membrane. Its subcellular location is the sarcolemma. The protein resides in the T-tubule. Its function is as follows. Acts as a cargo receptor for glycogen. Delivers its cargo to an autophagic pathway called glycophagy, resulting in the transport of glycogen to lysosomes. This chain is Starch-binding domain-containing protein 1, found in Rattus norvegicus (Rat).